Consider the following 514-residue polypeptide: MVAEFQIASAQSSALTSTEEEHCSINSDKAAKLDLELTSERKNDGKQSHEVTFNEDIADPEDIARHMSTARRYYISSLITFTSMVITMISSSWTLPSTHIIEHFHISHEVSTLGITLYVFGLGIGPLFLSPLSELYGRRITFLYALTLSIIWQCLTIWSKTITGVMFGRFLSGFFGSAFLSVAGGAIADIFDKDQIGIPMAIYTTSAFLGPSLGPIIGGALYHQSYKWTFITLLITSGCCLVMIIFTIPETYKPMLLIRKAKRLRKEKNDQRYYAVLEVTREQTSLLSAIFLSTKRPFGLLLRDRMMGVLCFYTGLELAIIYLYFVAFPYVFKKLYNFGPMEIACSYIGIMVGMILSAPTCLLFQKTFEWRVKRNNGVKTPEMRFEPLFYGAFLTPVGLFIFAFTCYKHVHWIAPIIGSAIFGSGVYFVFTGVFAYTVDAYRRYAASGMACNTFVRCIMAGVFPLFGLQMYKSMGVNWAGFLLAMVTVAMIPVPFLFTKYGARLRAKSPYAWDD.

Over 1 to 74 (MVAEFQIASA…RHMSTARRYY (74 aa)) the chain is Cytoplasmic. The helical transmembrane segment at 75-95 (ISSLITFTSMVITMISSSWTL) threads the bilayer. The Extracellular portion of the chain corresponds to 96-111 (PSTHIIEHFHISHEVS). The helical transmembrane segment at 112-132 (TLGITLYVFGLGIGPLFLSPL) threads the bilayer. The Cytoplasmic segment spans residues 133–141 (SELYGRRIT). A helical membrane pass occupies residues 142–162 (FLYALTLSIIWQCLTIWSKTI). Residues 163–170 (TGVMFGRF) are Extracellular-facing. A helical transmembrane segment spans residues 171–191 (LSGFFGSAFLSVAGGAIADIF). The Cytoplasmic portion of the chain corresponds to 192 to 200 (DKDQIGIPM). The helical transmembrane segment at 201–221 (AIYTTSAFLGPSLGPIIGGAL) threads the bilayer. Residues 222–227 (YHQSYK) lie on the Extracellular side of the membrane. Residues 228-248 (WTFITLLITSGCCLVMIIFTI) form a helical membrane-spanning segment. The Cytoplasmic portion of the chain corresponds to 249–307 (PETYKPMLLIRKAKRLRKEKNDQRYYAVLEVTREQTSLLSAIFLSTKRPFGLLLRDRMM). The chain crosses the membrane as a helical span at residues 308–328 (GVLCFYTGLELAIIYLYFVAF). At 329-342 (PYVFKKLYNFGPME) the chain is on the extracellular side. A helical membrane pass occupies residues 343 to 363 (IACSYIGIMVGMILSAPTCLL). Residues 364–386 (FQKTFEWRVKRNNGVKTPEMRFE) lie on the Cytoplasmic side of the membrane. The helical transmembrane segment at 387–407 (PLFYGAFLTPVGLFIFAFTCY) threads the bilayer. Residues 408-412 (KHVHW) lie on the Extracellular side of the membrane. A helical transmembrane segment spans residues 413-433 (IAPIIGSAIFGSGVYFVFTGV). Topologically, residues 434–447 (FAYTVDAYRRYAAS) are cytoplasmic. The chain crosses the membrane as a helical span at residues 448-468 (GMACNTFVRCIMAGVFPLFGL). Over 469–477 (QMYKSMGVN) the chain is Extracellular. Residues 478 to 498 (WAGFLLAMVTVAMIPVPFLFT) form a helical membrane-spanning segment. The Cytoplasmic portion of the chain corresponds to 499-514 (KYGARLRAKSPYAWDD).

Belongs to the major facilitator superfamily. CAR1 family.

It localises to the membrane. Its function is as follows. Probable drug/proton antiporter. The sequence is that of Probable drug/proton antiporter YHK8 (YHK8) from Saccharomyces cerevisiae (strain ATCC 204508 / S288c) (Baker's yeast).